The chain runs to 261 residues: Trifolitoxin immunity protein (261 aa).

In terms of biological role, required for TFX resistance. This Rhizobium leguminosarum bv. trifolii protein is Trifolitoxin immunity protein (tfxG).